The chain runs to 328 residues: 3-ketodihydrosphingosine reductase TSC10 (328 aa).

Leucine 16 provides a ligand contact to NADP(+). Residues glycine 19, serine 21, and glycine 23 each contribute to the NADPH site. Residues glycine 19–glycine 23 carry the GXSXG motif. Leucine 24 is an NADP(+) binding site. Residues arginine 44, lysine 48, and aspartate 73 each contribute to the NADPH site. Residue aspartate 73 coordinates NADP(+). Serine 161 functions as the Proton donor in the catalytic mechanism. Tyrosine 175, lysine 179, and serine 210 together coordinate NADP(+). The active-site Proton acceptor is the tyrosine 175. Lysine 179 serves as the catalytic Lowers pKa of active site Tyr. The chain crosses the membrane as a helical span at residues phenylalanine 277–valine 297.

It belongs to the short-chain dehydrogenases/reductases (SDR) family.

It is found in the endoplasmic reticulum membrane. The catalysed reaction is sphinganine + NADP(+) = 3-oxosphinganine + NADPH + H(+). The protein operates within lipid metabolism; sphingolipid metabolism. Its function is as follows. Catalyzes the reduction of 3'-oxosphinganine (3-ketodihydrosphingosine/KDS) to sphinganine (dihydrosphingosine/DHS), the second step of de novo sphingolipid biosynthesis. The sequence is that of 3-ketodihydrosphingosine reductase TSC10 (TSC10) from Debaryomyces hansenii (strain ATCC 36239 / CBS 767 / BCRC 21394 / JCM 1990 / NBRC 0083 / IGC 2968) (Yeast).